A 213-amino-acid chain; its full sequence is Orotate phosphoribosyltransferase (213 aa).

5-phospho-alpha-D-ribose 1-diphosphate is bound at residue K26. Position 34 to 35 (34 to 35) interacts with orotate; it reads FF. 5-phospho-alpha-D-ribose 1-diphosphate contacts are provided by residues 72-73, R99, K100, K103, H105, and 124-132; these read YK and DDVITAGTA. The orotate site is built by T128 and R156.

The protein belongs to the purine/pyrimidine phosphoribosyltransferase family. PyrE subfamily. In terms of assembly, homodimer. It depends on Mg(2+) as a cofactor.

It carries out the reaction orotidine 5'-phosphate + diphosphate = orotate + 5-phospho-alpha-D-ribose 1-diphosphate. It participates in pyrimidine metabolism; UMP biosynthesis via de novo pathway; UMP from orotate: step 1/2. Functionally, catalyzes the transfer of a ribosyl phosphate group from 5-phosphoribose 1-diphosphate to orotate, leading to the formation of orotidine monophosphate (OMP). The polypeptide is Orotate phosphoribosyltransferase (Klebsiella pneumoniae (strain 342)).